We begin with the raw amino-acid sequence, 233 residues long: Antiholin-like protein LrgB (233 aa).

6 helical membrane passes run 5-25, 33-53, 63-83, 97-117, 152-172, and 212-232; these read LGIN…VIAT, GFFL…FLKL, IGGD…AIPL, IFGG…LVAI, LTSL…AKIV, and IAVV…APIL.

This sequence belongs to the CidB/LrgB family. LrgB subfamily.

The protein localises to the cell membrane. Its function is as follows. Inhibits the expression or activity of extracellular murein hydrolases by interacting, possibly with LrgA, with the holin-like proteins CidA and/or CidB. The LrgAB and CidAB proteins may affect the proton motive force of the membrane. May be involved in programmed cell death (PCD), possibly triggering PCD in response to antibiotics and environmental stresses. The protein is Antiholin-like protein LrgB of Staphylococcus epidermidis (strain ATCC 35984 / DSM 28319 / BCRC 17069 / CCUG 31568 / BM 3577 / RP62A).